Reading from the N-terminus, the 584-residue chain is Potassium-transporting ATPase potassium-binding subunit (584 aa).

Helical transmembrane passes span 8 to 28 (FLVL…EFMF), 65 to 85 (SFAV…FILQ), 139 to 159 (VQNF…IYGF), 172 to 192 (VLLL…ALVL), 262 to 282 (FTDL…CFMF), 292 to 312 (GIAI…LGIW), 398 to 418 (GLYC…LMVG), 440 to 460 (ILIP…ITAG), 507 to 527 (MFVG…AFVA), and 544 to 564 (LFII…FLPA).

Belongs to the KdpA family. In terms of assembly, the system is composed of three essential subunits: KdpA, KdpB and KdpC.

The protein localises to the cell membrane. Part of the high-affinity ATP-driven potassium transport (or Kdp) system, which catalyzes the hydrolysis of ATP coupled with the electrogenic transport of potassium into the cytoplasm. This subunit binds the extracellular potassium ions and delivers the ions to the membrane domain of KdpB through an intramembrane tunnel. The sequence is that of Potassium-transporting ATPase potassium-binding subunit from Methanoregula boonei (strain DSM 21154 / JCM 14090 / 6A8).